The sequence spans 214 residues: External core antigen (214 aa).

A signal peptide spans 1 to 19; that stretch reads MQLFHLCLIISCTCPTLQA. An HBEAG region spans residues 25 to 27; sequence GWL. The disordered stretch occupies residues 164 to 214; it reads PNAPILSTLPETTVVRRRDRGRSPRRRTPSPRRRRSQSPRRRRSQSRESQC. Residues 178–207 show a composition bias toward basic residues; that stretch reads VRRRDRGRSPRRRTPSPRRRRSQSPRRRRS. The stretch at 186-192 is one 1; half-length repeat; sequence SPRRRTP. The interval 186–208 is 3 X 8 AA repeats of S-P-R-R-R-R-S-Q; that stretch reads SPRRRTPSPRRRRSQSPRRRRSQ. A propeptide spanning residues 186-214 is cleaved from the precursor; the sequence is SPRRRTPSPRRRRSQSPRRRRSQSRESQC. Tandem repeats lie at residues 193–200 and 201–208.

The protein belongs to the orthohepadnavirus precore antigen family. Homodimerizes. In terms of processing, phosphorylated. Cleaved by host furin.

Its subcellular location is the secreted. The protein resides in the host nucleus. Functionally, may regulate immune response to the intracellular capsid in acting as a T-cell tolerogen, by having an immunoregulatory effect which prevents destruction of infected cells by cytotoxic T-cells. This immune regulation may predispose to chronicity during perinatal infections and prevent severe liver injury during adult infections. In Homo sapiens (Human), this protein is External core antigen.